Reading from the N-terminus, the 100-residue chain is Large ribosomal subunit protein eL36A (100 aa).

T2 carries the post-translational modification N-acetylthreonine.

It belongs to the eukaryotic ribosomal protein eL36 family. In terms of assembly, component of the large ribosomal subunit (LSU). Mature yeast ribosomes consist of a small (40S) and a large (60S) subunit. The 40S small subunit contains 1 molecule of ribosomal RNA (18S rRNA) and 33 different proteins (encoded by 57 genes). The large 60S subunit contains 3 rRNA molecules (25S, 5.8S and 5S rRNA) and 46 different proteins (encoded by 81 genes). In terms of processing, N-terminally acetylated by acetyltransferase NatA.

It is found in the cytoplasm. Component of the ribosome, a large ribonucleoprotein complex responsible for the synthesis of proteins in the cell. The small ribosomal subunit (SSU) binds messenger RNAs (mRNAs) and translates the encoded message by selecting cognate aminoacyl-transfer RNA (tRNA) molecules. The large subunit (LSU) contains the ribosomal catalytic site termed the peptidyl transferase center (PTC), which catalyzes the formation of peptide bonds, thereby polymerizing the amino acids delivered by tRNAs into a polypeptide chain. The nascent polypeptides leave the ribosome through a tunnel in the LSU and interact with protein factors that function in enzymatic processing, targeting, and the membrane insertion of nascent chains at the exit of the ribosomal tunnel. The sequence is that of Large ribosomal subunit protein eL36A from Saccharomyces cerevisiae (strain ATCC 204508 / S288c) (Baker's yeast).